A 303-amino-acid chain; its full sequence is ATP phosphoribosyltransferase (303 aa).

The protein belongs to the ATP phosphoribosyltransferase family. Long subfamily. Requires Mg(2+) as cofactor.

It is found in the cytoplasm. It carries out the reaction 1-(5-phospho-beta-D-ribosyl)-ATP + diphosphate = 5-phospho-alpha-D-ribose 1-diphosphate + ATP. The protein operates within amino-acid biosynthesis; L-histidine biosynthesis; L-histidine from 5-phospho-alpha-D-ribose 1-diphosphate: step 1/9. With respect to regulation, feedback inhibited by histidine. Its function is as follows. Catalyzes the condensation of ATP and 5-phosphoribose 1-diphosphate to form N'-(5'-phosphoribosyl)-ATP (PR-ATP). Has a crucial role in the pathway because the rate of histidine biosynthesis seems to be controlled primarily by regulation of HisG enzymatic activity. The chain is ATP phosphoribosyltransferase from Stenotrophomonas maltophilia (strain R551-3).